A 164-amino-acid chain; its full sequence is HTH-type transcriptional regulator IscR (164 aa).

The 130-residue stretch at 2 to 131 folds into the HTH rrf2-type domain; the sequence is RLTSKGRYAV…SSISLEELVN (130 aa). The H-T-H motif DNA-binding region spans 28–51; it reads LADISERQGISLSYLEQLFSRLRK. Residues Cys-92, Cys-98, and Cys-104 each contribute to the [2Fe-2S] cluster site. Positions 141-164 are disordered; it reads RQDNDKRRAPNGRAQETINVNLRP. Over residues 154–164 the composition is skewed to polar residues; sequence AQETINVNLRP.

The cofactor is [2Fe-2S] cluster.

Its function is as follows. Regulates the transcription of several operons and genes involved in the biogenesis of Fe-S clusters and Fe-S-containing proteins. The sequence is that of HTH-type transcriptional regulator IscR from Photorhabdus laumondii subsp. laumondii (strain DSM 15139 / CIP 105565 / TT01) (Photorhabdus luminescens subsp. laumondii).